The sequence spans 409 residues: uncharacterized protein (409 aa).

An EAL domain is found at 1 to 209 (MRVFVARQPI…GHDLSTHFYS (209 aa)). An HDOD domain is found at 203–392 (LSTHFYSYYE…GNQLDKEEAY (190 aa)).

This is an uncharacterized protein from Bacillus subtilis (strain 168).